Reading from the N-terminus, the 549-residue chain is Glucose-6-phosphate isomerase (549 aa).

Residues lysine 80, lysine 228, and lysine 234 each carry the N6-acetyllysine modification. Glutamate 355 (proton donor) is an active-site residue. Active-site residues include histidine 386 and lysine 514.

It belongs to the GPI family.

Its subcellular location is the cytoplasm. It catalyses the reaction alpha-D-glucose 6-phosphate = beta-D-fructose 6-phosphate. It functions in the pathway carbohydrate biosynthesis; gluconeogenesis. It participates in carbohydrate degradation; glycolysis; D-glyceraldehyde 3-phosphate and glycerone phosphate from D-glucose: step 2/4. Functionally, catalyzes the reversible isomerization of glucose-6-phosphate to fructose-6-phosphate. This Shigella boydii serotype 4 (strain Sb227) protein is Glucose-6-phosphate isomerase.